Here is a 148-residue protein sequence, read N- to C-terminus: Putative pre-16S rRNA nuclease (148 aa).

This sequence belongs to the YqgF nuclease family.

It is found in the cytoplasm. Its function is as follows. Could be a nuclease involved in processing of the 5'-end of pre-16S rRNA. This chain is Putative pre-16S rRNA nuclease, found in Chlamydia trachomatis serovar A (strain ATCC VR-571B / DSM 19440 / HAR-13).